Here is a 428-residue protein sequence, read N- to C-terminus: MSYLIKNGWILNENGEKTQADIRVTGETITAIGKLDATDNETVIDAKGLLVSPGFVDLHVHFREPGGEKKETIETGAKAAARGGYTTVAAMPNTRPVPDTKEQMEWVQNRIKETSCVRVLPYASITIRQIGDEMTNFEALKEAGAFAFTDDGVGIQTAGMMYEAMKRAAAIDKAIVAHCEDNSLIYGGSVHEGTFSKANGLNGIPSVCESVHIARDVLLAEAANCHYHVCHISTKESVRVVRDAKKAGIRVTAEVSPHHLLLCDEDIPGLDTNYKMNPPLRSPEDRAALIEGLLDGTIDFIATDHAPHTEEEKNTEMKLAPFGIVGLETAFPLLYTHFVKNGSWSLKQLIDYMTIKPCEAFGLPYGTLQTGQAADITLIDLEKEAVIDKETFLSKGKNTPFNGISCTGWPVATIAAGKLAYEEGRLVK.

Positions 59 and 61 each coordinate Zn(2+). Residues 61-63 and Asn-93 contribute to the substrate site; that span reads HFR. Residues Asp-151, His-178, and His-231 each coordinate Zn(2+). Residue Asn-277 participates in substrate binding. Asp-304 contacts Zn(2+). Asp-304 is a catalytic residue. Substrate-binding positions include His-308 and 322 to 323; that span reads FG.

This sequence belongs to the metallo-dependent hydrolases superfamily. DHOase family. Class I DHOase subfamily. In terms of assembly, homodimer. Zn(2+) serves as cofactor.

The catalysed reaction is (S)-dihydroorotate + H2O = N-carbamoyl-L-aspartate + H(+). It functions in the pathway pyrimidine metabolism; UMP biosynthesis via de novo pathway; (S)-dihydroorotate from bicarbonate: step 3/3. Its function is as follows. Catalyzes the reversible cyclization of carbamoyl aspartate to dihydroorotate. This is Dihydroorotase from Bacillus subtilis (strain 168).